A 69-amino-acid polypeptide reads, in one-letter code: U-Asilidin(12)-Dg3a (69 aa).

The first 19 residues, 1–19, serve as a signal peptide directing secretion; that stretch reads MRFLNIFLFFAAIIAFATA. Residues 20-33 constitute a propeptide that is removed on maturation; sequence SQVFEEDEIDMEPR. 3 disulfide bridges follow: Cys36/Cys59, Cys45/Cys65, and Cys49/Cys67.

This sequence belongs to the asilidin-12 family. Expressed by the venom gland.

The protein resides in the secreted. Functionally, moderately increases Kv11.1/KCNH2/ERG1 currents and shifts the voltage-dependence of the channel activation to hyperpolarised potentials. In vivo, induces neurotoxic effects when injected into insects (tested on L.cuprina and A.domesticus). The protein is U-Asilidin(12)-Dg3a of Dolopus genitalis (Giant Australian assassin fly).